Here is a 277-residue protein sequence, read N- to C-terminus: Small ribosomal subunit protein uS5 (277 aa).

The tract at residues 18 to 40 (AAGRPSWSWQRPGERARTPGRKA) is disordered. The segment covering 29–40 (PGERARTPGRKA) has biased composition (basic and acidic residues). Residues 87–150 (LKDEVLKIMP…ILAKLSIIPV (64 aa)) form the S5 DRBM domain.

It belongs to the universal ribosomal protein uS5 family. Component of the small ribosomal subunit.

The protein resides in the cytoplasm. It is found in the nucleus. The protein localises to the nucleolus. In terms of biological role, component of the ribosome, a large ribonucleoprotein complex responsible for the synthesis of proteins in the cell. The small ribosomal subunit (SSU) binds messenger RNAs (mRNAs) and translates the encoded message by selecting cognate aminoacyl-transfer RNA (tRNA) molecules. The large subunit (LSU) contains the ribosomal catalytic site termed the peptidyl transferase center (PTC), which catalyzes the formation of peptide bonds, thereby polymerizing the amino acids delivered by tRNAs into a polypeptide chain. The nascent polypeptides leave the ribosome through a tunnel in the LSU and interact with protein factors that function in enzymatic processing, targeting, and the membrane insertion of nascent chains at the exit of the ribosomal tunnel. Plays a role in the assembly and function of the 40S ribosomal subunit. Mutations in this protein affects the control of translational fidelity. Involved in nucleolar processing of pre-18S ribosomal RNA and ribosome assembly. In Ictalurus punctatus (Channel catfish), this protein is Small ribosomal subunit protein uS5 (rps2).